We begin with the raw amino-acid sequence, 222 residues long: Flagellar L-ring protein (222 aa).

The first 18 residues, 1–18, serve as a signal peptide directing secretion; it reads MKTTRAIAMLGLLLGLAA. Cysteine 19 carries the N-palmitoyl cysteine lipid modification. Residue cysteine 19 is the site of S-diacylglycerol cysteine attachment.

Belongs to the FlgH family. The basal body constitutes a major portion of the flagellar organelle and consists of four rings (L,P,S, and M) mounted on a central rod.

Its subcellular location is the cell outer membrane. The protein resides in the bacterial flagellum basal body. Its function is as follows. Assembles around the rod to form the L-ring and probably protects the motor/basal body from shearing forces during rotation. The polypeptide is Flagellar L-ring protein (Thiobacillus denitrificans (strain ATCC 25259 / T1)).